We begin with the raw amino-acid sequence, 368 residues long: MSTTGQVIRCKAAILWKPGAPFSIEEVEVAPPKAKEVRIKVVATGLCGTEMKVLGSKHLDLLYPTILGHEGAGIVESIGEGVSTVKPGDKVITLFLPQCGECTSCLNSEGNFCIQFKQSKTQLMSDGTSRFTCKGKSIYHFGNTSTFCEYTVIKEISVAKIDAVAPLEKVCLISCGFSTGFGAAINTAKVTPGSTCAVFGLGGVGLSVVMGCKAAGAARIIGVDVNKEKFKKAQELGATECLNPQDLKKPIQEVLFDMTDAGIDFCFEAIGNLDVLAAALASCNESYGVCVVVGVLPASVQLKISGQLFFSGRSLKGSVFGGWKSRQHIPKLVADYMAEKLNLDPLITHTLNLDKINEAVELMKTGKW.

Ser23 carries the post-translational modification Phosphoserine. Zn(2+) contacts are provided by Cys47, His69, Cys99, Cys102, Cys105, Cys113, and Cys175. NAD(+)-binding positions include 200 to 205 (GLGGVG), Asp224, Lys229, and 293 to 295 (VGV).

Belongs to the zinc-containing alcohol dehydrogenase family. Class-V subfamily. In terms of assembly, dimer. The cofactor is Zn(2+). Stomach and liver.

The protein localises to the cytoplasm. It carries out the reaction a primary alcohol + NAD(+) = an aldehyde + NADH + H(+). It catalyses the reaction a secondary alcohol + NAD(+) = a ketone + NADH + H(+). Inhibited partially by pyrazole (10 mM) in the reaction mixture containing 100 mM ethanol at pH 10.0. Alcohol dehydrogenase. Catalyzes the NAD-dependent oxidation of primary alcohols to the corresponding aldehydes. Oxidizes secondary alcohols to the corresponding ketones. This is Alcohol dehydrogenase 6 (ADH6) from Homo sapiens (Human).